A 336-amino-acid chain; its full sequence is uncharacterized protein (336 aa).

29-36 is a binding site for ATP; that stretch reads GPKSSGKS.

It belongs to the archaeal ATPase family.

This is an uncharacterized protein from Methanocaldococcus jannaschii (strain ATCC 43067 / DSM 2661 / JAL-1 / JCM 10045 / NBRC 100440) (Methanococcus jannaschii).